The sequence spans 493 residues: MSTSDRVRAILHATIQAYRGAPAYRQRGDVFCQLDRIGARLAEPLRIALAGTLKAGKSTLVNALVGDDIAPTDATEATRIVTWFRHGPTPRVTANHRGGRRANVPITRRGGLSFDLRRINPAELIDLEVEWPAEELIDATIVDTPGTSSLACDASERTLRLLVPADGVPRVDAVVFLLRTLNAADVALLKQIGGLVGGSVGALGIIGVASRADEIGAGRIDAMLSANDVAKRFTRELNQMGICQAVVPVSGLLALTARTLRQTEFIALRKLAGAERTELNRALLSVDRFVRRDSPLPVDAGIRAQLLERFGMFGIRMSIAVLAAGVTDSTGLAAELLERSGLVALRNVIDQQFAQRSDMLKAHTALVSLRRFVQTHPVPATPYVIADIDPLLADTHAFEELRMLSLLPSRATTLNDDEIASLRRIIGGSGTSAAARLGLDPANSREAPRAALAAAQHWRRRAAHPLNDPFTTRACRAAVRSAEAMVAEFSARR.

The protein is Isoniazid-induced protein IniC (iniC) of Mycobacterium tuberculosis (strain CDC 1551 / Oshkosh).